The sequence spans 338 residues: Ankyrin-repeat domain containing transcription coregulator asaA (338 aa).

A compositionally biased stretch (basic and acidic residues) spans 1 to 10 (MGAPHEEIQA). Disordered stretches follow at residues 1–70 (MGAP…LRST) and 112–137 (ASSV…PFID). A compositionally biased stretch (basic residues) spans 11-33 (LKRRREQNRLAQRRRRDNVRRRL). Polar residues predominate over residues 42–70 (SPASASQTSLCSSTDSRVTLNPHQSLRST). A compositionally biased stretch (low complexity) spans 112–130 (ASSVSPSSSAGPLSSSPSP). ANK repeat units lie at residues 235-264 (RWTT…DPNA), 268-297 (EGAT…DPTL), and 301-330 (AGWL…PVDY).

Its pathway is secondary metabolite biosynthesis. Transcription coregulator involved in regulation of gene cluster that mediates the biosynthesis of aspergillic acid, a hydroxamic acid-containing pyrazinone with aliphatic side chains that originates from leucine (Leu) and isoleucine (Ile). Aspergillic acid has antibiotic properties and was shown to be lethal to mice. The protein is Ankyrin-repeat domain containing transcription coregulator asaA of Aspergillus flavus (strain ATCC 200026 / FGSC A1120 / IAM 13836 / NRRL 3357 / JCM 12722 / SRRC 167).